A 176-amino-acid polypeptide reads, in one-letter code: Skp1-related protein (176 aa).

It belongs to the SKP1 family. As to quaternary structure, probable component of the SCF(sel-10) E3 ubiquitin-protein ligase complex containing F-box domain-containing protein sel-10 as the substrate recognition component. Interacts with cul-1. May interact with the F-box protein mec-15. Interacts with dre-1. Interacts with syg-1. Interacts with sel-10. Ubiquitously expressed in the adult.

Probable essential component of SCF (SKP1-CUL1-F-box protein) E3 ubiquitin-protein ligase complexes, which mediate the ubiquitination and subsequent proteasomal degradation of target proteins. Regulates cell proliferation during embryonic and larval development. Involved in synapse elimination in early synapse development. May negatively regulate the apoptotic activity of cep-1 in response to genotoxic stress. Plays a role in sex determination. The protein is Skp1-related protein of Caenorhabditis elegans.